We begin with the raw amino-acid sequence, 120 residues long: Putative cysteine proteinase inhibitor 11 (120 aa).

Positions 1 to 24 (MARHPGLLLILLAAVAAVATTSRA) are cleaved as a signal peptide. Residues 73–77 (QVVQG) carry the Secondary area of contact motif.

Belongs to the cystatin family. Phytocystatin subfamily.

The protein resides in the secreted. Functionally, specific inhibitor of cysteine proteinases. Probably involved in the regulation of endogenous processes and in defense against pests and pathogens. The polypeptide is Putative cysteine proteinase inhibitor 11 (Oryza sativa subsp. japonica (Rice)).